The primary structure comprises 170 residues: Translocon-associated protein subunit gamma (170 aa).

Topologically, residues 1-24 (MAEVDEFSAFRHENDVSIEQRIVY) are lumenal. A helical transmembrane segment spans residues 25–45 (FINSLIVALVPVYLYHAIFFM). Over 46–51 (SIDDHM) the chain is Cytoplasmic. A helical membrane pass occupies residues 52–72 (IIYGSVTLFAAIVLTFAYNNI). The Lumenal segment spans residues 73–121 (YRMKRLKLSASREHISIASKNKVGDKKKFAAAQKEVQALVTSHEAIAAS). Residues 122-141 (IMYNNAVFLICVSIFSFIIF) traverse the membrane as a helical segment. The Cytoplasmic portion of the chain corresponds to 142 to 145 (KNVP). The helical transmembrane segment at 146 to 168 (LVYNYIISISLGAGLTSFLSTSS) threads the bilayer.

This sequence belongs to the TRAP-gamma family. Heterotrimer of TRAP-alpha, TRAP-beta and TRAP-gamma.

Its subcellular location is the endoplasmic reticulum membrane. Its function is as follows. TRAP proteins are part of a complex whose function is to bind calcium to the ER membrane and thereby regulate the retention of ER resident proteins. In Dictyostelium discoideum (Social amoeba), this protein is Translocon-associated protein subunit gamma (ssr3).